The primary structure comprises 230 residues: Ribonuclease 3 (230 aa).

One can recognise an RNase III domain in the interval L7–G134. Position 47 (E47) interacts with Mg(2+). Residue D51 is part of the active site. Positions 120 and 123 each coordinate Mg(2+). E123 is an active-site residue. The DRBM domain occupies D161 to N230.

This sequence belongs to the ribonuclease III family. In terms of assembly, homodimer. The cofactor is Mg(2+).

It is found in the cytoplasm. The enzyme catalyses Endonucleolytic cleavage to 5'-phosphomonoester.. In terms of biological role, digests double-stranded RNA. Involved in the processing of primary rRNA transcript to yield the immediate precursors to the large and small rRNAs (23S and 16S). Processes some mRNAs, and tRNAs when they are encoded in the rRNA operon. Processes pre-crRNA and tracrRNA of type II CRISPR loci if present in the organism. The protein is Ribonuclease 3 of Clostridium acetobutylicum (strain ATCC 824 / DSM 792 / JCM 1419 / IAM 19013 / LMG 5710 / NBRC 13948 / NRRL B-527 / VKM B-1787 / 2291 / W).